The following is a 264-amino-acid chain: Thymidylate synthase (264 aa).

DUMP is bound at residue R21. Residue H51 coordinates (6R)-5,10-methylene-5,6,7,8-tetrahydrofolate. 126-127 serves as a coordination point for dUMP; the sequence is RR. The active-site Nucleophile is C146. Residues 166–169, N177, and 207–209 contribute to the dUMP site; these read RSCD and HLY. Position 169 (D169) interacts with (6R)-5,10-methylene-5,6,7,8-tetrahydrofolate. A263 contacts (6R)-5,10-methylene-5,6,7,8-tetrahydrofolate.

This sequence belongs to the thymidylate synthase family. Bacterial-type ThyA subfamily. In terms of assembly, homodimer.

It localises to the cytoplasm. The enzyme catalyses dUMP + (6R)-5,10-methylene-5,6,7,8-tetrahydrofolate = 7,8-dihydrofolate + dTMP. Its pathway is pyrimidine metabolism; dTTP biosynthesis. Functionally, catalyzes the reductive methylation of 2'-deoxyuridine-5'-monophosphate (dUMP) to 2'-deoxythymidine-5'-monophosphate (dTMP) while utilizing 5,10-methylenetetrahydrofolate (mTHF) as the methyl donor and reductant in the reaction, yielding dihydrofolate (DHF) as a by-product. This enzymatic reaction provides an intracellular de novo source of dTMP, an essential precursor for DNA biosynthesis. The sequence is that of Thymidylate synthase from Enterobacter sp. (strain 638).